A 301-amino-acid chain; its full sequence is Probable 5-dehydro-4-deoxyglucarate dehydratase (301 aa).

This sequence belongs to the DapA family.

It carries out the reaction 5-dehydro-4-deoxy-D-glucarate + H(+) = 2,5-dioxopentanoate + CO2 + H2O. The protein operates within carbohydrate acid metabolism; D-glucarate degradation; 2,5-dioxopentanoate from D-glucarate: step 2/2. The protein is Probable 5-dehydro-4-deoxyglucarate dehydratase of Cereibacter sphaeroides (strain ATCC 17029 / ATH 2.4.9) (Rhodobacter sphaeroides).